The sequence spans 244 residues: MVATNDSEAPQKILYESLCTVEAENLSEACNNAIEGRRAPAGRKAQVMRFIGEMCCCGDMFGTDTSINESVFSAMTYIEKNAWNVKDVFISPESEENVSNCVKLLELNEKIDYSAVHLKDIAMGLRIYVEQNMRNIIPLNVRKRVIEAYGSNDGEMKETIIPRIPFVVGDPHRLFLKSLKNIFLTIEMNAEDNGVNVEEIYRIFGPLVIRRPENMLETDTEVLRQILVDLMKADFDEFPSSFYL.

This is an uncharacterized protein from Encephalitozoon cuniculi (strain GB-M1) (Microsporidian parasite).